Here is a 937-residue protein sequence, read N- to C-terminus: Protocadherin alpha-7 (937 aa).

A signal peptide spans 1 to 29; that stretch reads MVNLRGYNWKSQQLLLFLIIVAAWEAGSG. Residues 30–697 are Extracellular-facing; it reads QLHYSVPEEA…RVDQRLVDVN (668 aa). Cadherin domains lie at 34–133, 157–242, 243–350, 351–455, 456–565, and 587–682; these read SVPE…PPMF, ASDA…APVF, DRSL…APQL, TVSS…APLF, AQPE…APTL, and PGQV…SSKV. C96 and C102 are oxidised to a cystine. O-linked (Man) threonine glycosylation is found at T223 and T225. N-linked (GlcNAc...) asparagine glycosylation is found at N257 and N265. An O-linked (Man) threonine glycan is attached at T438. S478 carries O-linked (Man) serine glycosylation. N-linked (GlcNAc...) asparagine glycosylation occurs at N548. The helical transmembrane segment at 698 to 718 threads the bilayer; it reads VYLIIAICAVSSLLVLTLLLY. The Cytoplasmic segment spans residues 719–937; it reads TALRCSATPT…GNSTTDNSDQ (219 aa). Disordered stretches follow at residues 755 to 794 and 816 to 843; these read RQRVCSGEGPPKTDLMAFSPSLPQGPSSTDNPRQPNPDWR and RAGPGGPDQQWPTVSSATPEPEAGEVSP. 5 PXXP repeats span residues 774–777, 786–789, 819–822, 860–863, and 878–881; these read PSLP, PRQP, PGGP, PGNP, and PGSP. Residues 774–881 form a 5 X 4 AA repeats of P-X-X-P region; it reads PSLPQGPSST…PDKFIIPGSP (108 aa). A compositionally biased stretch (polar residues) spans 775–787; it reads SLPQGPSSTDNPR. The disordered stretch occupies residues 887–937; it reads RQEPANNQIDKSDFITFGKKEETKKKKKKKKGNKTQEKKEKGNSTTDNSDQ. A compositionally biased stretch (basic and acidic residues) spans 896-910; it reads DKSDFITFGKKEETK.

Forms homodimers in trans (molecules expressed by two different cells). Forms promiscuous heterodimers in cis (at the plasma membrane of the same cell) with other protocadherins.

Its subcellular location is the cell membrane. In terms of biological role, calcium-dependent cell-adhesion protein involved in cells self-recognition and non-self discrimination. Thereby, it is involved in the establishment and maintenance of specific neuronal connections in the brain. In Mus musculus (Mouse), this protein is Protocadherin alpha-7.